The sequence spans 91 residues: CRISPR-associated endoribonuclease Cas2 (91 aa).

Residue Asp14 participates in Mg(2+) binding.

It belongs to the CRISPR-associated endoribonuclease Cas2 protein family. In terms of assembly, homodimer, forms a heterotetramer with a Cas1 homodimer. It depends on Mg(2+) as a cofactor.

Functionally, CRISPR (clustered regularly interspaced short palindromic repeat), is an adaptive immune system that provides protection against mobile genetic elements (viruses, transposable elements and conjugative plasmids). CRISPR clusters contain sequences complementary to antecedent mobile elements and target invading nucleic acids. CRISPR clusters are transcribed and processed into CRISPR RNA (crRNA). Functions as a ssRNA-specific endoribonuclease. Involved in the integration of spacer DNA into the CRISPR cassette. This chain is CRISPR-associated endoribonuclease Cas2, found in Nanoarchaeum equitans (strain Kin4-M).